Reading from the N-terminus, the 234-residue chain is Sugar fermentation stimulation protein homolog (234 aa).

This sequence belongs to the SfsA family.

The protein is Sugar fermentation stimulation protein homolog of Enterobacter sp. (strain 638).